Consider the following 283-residue polypeptide: MKRKFVGAAIGGALAVAGAPVALSAVGFTGAGIAAGSIAAKMMSAAAIANGGGIAAGGLVATLQSVGVLGLSTITNIILVAVGTATGARAEGSMGASREQESGPQDPPQELQEPQEPPSCKKQDLNLGKFVGAAIGGALAVAGAPIALSAVGFTGAGIAAGSIAAKMMSAAAIANGGGIAAGGLVATLQSVGILGLSTSTNIILGAVGAATGATAAGAMGACREQEPGLQDLQQEPKEPQEPQELQKQQEPQEPQELQKQQETQETQETQELQKTQEPPSYEK.

The transit peptide at 1–90 (MKRKFVGAAI…AVGTATGARA (90 aa)) directs the protein to the mitochondrion. The segment at 90 to 120 (AEGSMGASREQESGPQDPPQELQEPQEPPSC) is disordered. The next 3 membrane-spanning stretches (helical) occupy residues 130–150 (FVGA…ALSA), 176–196 (GGGI…ILGL), and 202–222 (IILG…MGAC). A disordered region spans residues 227–283 (PGLQDLQQEPKEPQEPQELQKQQEPQEPQELQKQQETQETQETQELQKTQEPPSYEK). Over residues 242–283 (PQELQKQQEPQEPQELQKQQETQETQETQELQKTQEPPSYEK) the composition is skewed to low complexity.

This sequence belongs to the IFI6/IFI27 family. In terms of assembly, homooligomer. Interacts with BAK1. Interacts with BAX. Interacts with adenine nucleotide translocase.

The protein resides in the mitochondrion inner membrane. Functions in the intrinsic apoptotic signaling pathway and may have an interferon-induced antiviral activity. The protein is Interferon alpha-inducible protein 27-like protein 2B of Mus musculus (Mouse).